Reading from the N-terminus, the 214-residue chain is Outer-membrane lipoprotein carrier protein (214 aa).

Residues 1–23 (MNKRITVLSLLLATSLSSAAAMA) form the signal peptide.

The protein belongs to the LolA family. In terms of assembly, monomer.

The protein localises to the periplasm. Functionally, participates in the translocation of lipoproteins from the inner membrane to the outer membrane. Only forms a complex with a lipoprotein if the residue after the N-terminal Cys is not an aspartate (The Asp acts as a targeting signal to indicate that the lipoprotein should stay in the inner membrane). The sequence is that of Outer-membrane lipoprotein carrier protein from Shewanella frigidimarina (strain NCIMB 400).